A 305-amino-acid polypeptide reads, in one-letter code: Porphobilinogen deaminase (305 aa).

The residue at position 240 (C240) is an S-(dipyrrolylmethanemethyl)cysteine.

This sequence belongs to the HMBS family. Monomer. It depends on dipyrromethane as a cofactor.

The catalysed reaction is 4 porphobilinogen + H2O = hydroxymethylbilane + 4 NH4(+). It participates in porphyrin-containing compound metabolism; protoporphyrin-IX biosynthesis; coproporphyrinogen-III from 5-aminolevulinate: step 2/4. Functionally, tetrapolymerization of the monopyrrole PBG into the hydroxymethylbilane pre-uroporphyrinogen in several discrete steps. In Xylella fastidiosa (strain 9a5c), this protein is Porphobilinogen deaminase (hemC).